The sequence spans 324 residues: MELLPHEKQVVEYEKTIAEFKEKNKKNSLLSSSEIQKLERRLDKLKEKIYADLTPWERVQICRHPSRPRSVNYIEGMCEEFVELCGDRTFRDDPAVVGGLAKIQGQRFMLIGQEKGCDTSSRMHRNFGMLCPEGFRKALRLAKMAEKFGLSIVFLVDTPGAFPGLTAEERGQGWAIANNLFQLARLKTPIIVLVIGEGCSGGALGMAIGDVIAMLEHSYYSVISPEGCASILWKDPKKNSEAAAMLKMHGEDLKQFAIVDVVIKEPVGGAHHNPAAVYRDVRDFILREWLRLKDLSIEDLLEQRYQKFRTIGLYETSSESSPEA.

One can recognise a CoA carboxyltransferase C-terminal domain in the interval 37 to 291; it reads KLERRLDKLK…RDFILREWLR (255 aa).

The protein belongs to the AccA family. In terms of assembly, acetyl-CoA carboxylase is a heterohexamer composed of biotin carboxyl carrier protein (AccB), biotin carboxylase (AccC) and two subunits each of ACCase subunit alpha (AccA) and ACCase subunit beta (AccD).

Its subcellular location is the cytoplasm. The enzyme catalyses N(6)-carboxybiotinyl-L-lysyl-[protein] + acetyl-CoA = N(6)-biotinyl-L-lysyl-[protein] + malonyl-CoA. It functions in the pathway lipid metabolism; malonyl-CoA biosynthesis; malonyl-CoA from acetyl-CoA: step 1/1. Component of the acetyl coenzyme A carboxylase (ACC) complex. First, biotin carboxylase catalyzes the carboxylation of biotin on its carrier protein (BCCP) and then the CO(2) group is transferred by the carboxyltransferase to acetyl-CoA to form malonyl-CoA. The chain is Acetyl-coenzyme A carboxylase carboxyl transferase subunit alpha from Chlamydia abortus (strain DSM 27085 / S26/3) (Chlamydophila abortus).